The sequence spans 354 residues: uncharacterized protein (354 aa).

It belongs to the asfivirus B354L family.

This is an uncharacterized protein from African swine fever virus (isolate Tick/South Africa/Pretoriuskop Pr4/1996) (ASFV).